Here is a 297-residue protein sequence, read N- to C-terminus: uncharacterized protein (297 aa).

Positions 136–174 (FSETNDDSTDEEIDTPINDDDDDDKNNDADNNDINEDNK) are disordered. The span at 139–170 (TNDDSTDEEIDTPINDDDDDDKNNDADNNDIN) shows a compositional bias: acidic residues.

It to S.pombe SpBC725.03.

This is an uncharacterized protein from Saccharomyces cerevisiae (strain ATCC 204508 / S288c) (Baker's yeast).